The following is a 214-amino-acid chain: UBX domain-containing protein 10 (214 aa).

The span at 1-13 (MHVTRPKSSKGRS) shows a compositional bias: basic residues. Positions 1–79 (MHVTRPKSSK…AYDRPPEEPV (79 aa)) are disordered. Positions 16–25 (MITNSSMIYT) are enriched in polar residues. Residues 49 to 60 (SLRSRAILRRSS) are compositionally biased toward low complexity. Residues 127–204 (PEESDLLLAI…GVLNKSVLCI (78 aa)) enclose the UBX domain.

It belongs to the UBXN10 family.

The protein localises to the cell projection. It is found in the cilium. Required for ciliogenesis. Acts as a tethering factor that facilitates recruitment of vcp/p97 to the intraflagellar transport complex B (IFT-B) in cilia. This chain is UBX domain-containing protein 10, found in Danio rerio (Zebrafish).